The chain runs to 558 residues: Arginine--tRNA ligase (558 aa).

Residues 129 to 139 carry the 'HIGH' region motif; that stretch reads ANPTGPLHVGH.

Belongs to the class-I aminoacyl-tRNA synthetase family. In terms of assembly, monomer.

The protein localises to the cytoplasm. The catalysed reaction is tRNA(Arg) + L-arginine + ATP = L-arginyl-tRNA(Arg) + AMP + diphosphate. The polypeptide is Arginine--tRNA ligase (Polaromonas naphthalenivorans (strain CJ2)).